The sequence spans 147 residues: Lysozyme C, intestinal isozyme (147 aa).

The first 18 residues, 1 to 18 (MKAVLILGLLLLSVTVQG), serve as a signal peptide directing secretion. Residues 19 to 147 (KKFEKCELAR…VSSYIRGCKL (129 aa)) enclose the C-type lysozyme domain. Intrachain disulfides connect Cys24–Cys145, Cys48–Cys133, Cys83–Cys99, and Cys95–Cys113. Active-site residues include Glu53 and Asp71.

Belongs to the glycosyl hydrolase 22 family.

The catalysed reaction is Hydrolysis of (1-&gt;4)-beta-linkages between N-acetylmuramic acid and N-acetyl-D-glucosamine residues in a peptidoglycan and between N-acetyl-D-glucosamine residues in chitodextrins.. Its function is as follows. Lysozymes have primarily a bacteriolytic function; those in tissues and body fluids are associated with the monocyte-macrophage system and enhance the activity of immunoagents. This is Lysozyme C, intestinal isozyme from Bos taurus (Bovine).